A 305-amino-acid polypeptide reads, in one-letter code: tRNA dimethylallyltransferase (305 aa).

Residue 8–15 (GPTAVGKT) coordinates ATP. Position 10-15 (10-15 (TAVGKT)) interacts with substrate. The tract at residues 33 to 36 (DSRQ) is interaction with substrate tRNA.

The protein belongs to the IPP transferase family. Monomer. It depends on Mg(2+) as a cofactor.

It carries out the reaction adenosine(37) in tRNA + dimethylallyl diphosphate = N(6)-dimethylallyladenosine(37) in tRNA + diphosphate. In terms of biological role, catalyzes the transfer of a dimethylallyl group onto the adenine at position 37 in tRNAs that read codons beginning with uridine, leading to the formation of N6-(dimethylallyl)adenosine (i(6)A). This Thermotoga neapolitana (strain ATCC 49049 / DSM 4359 / NBRC 107923 / NS-E) protein is tRNA dimethylallyltransferase.